The primary structure comprises 494 residues: tRNA-2-methylthio-N(6)-dimethylallyladenosine synthase (494 aa).

Residues 4 to 120 enclose the MTTase N-terminal domain; that stretch reads RSYQVRTFGC…LPVLLERARH (117 aa). Positions 13, 49, 83, 157, 161, and 164 each coordinate [4Fe-4S] cluster. The 232-residue stretch at 143-374 folds into the Radical SAM core domain; the sequence is RASHHSAWVS…SLQDEMSWAE (232 aa). One can recognise a TRAM domain in the interval 376 to 449; the sequence is RAQVGRRVEI…PHHLTADGPL (74 aa). Residues 465–494 are disordered; it reads RAIAGDTPRPDRPAVSLGMPQLRPSAPAAR.

It belongs to the methylthiotransferase family. MiaB subfamily. Monomer. [4Fe-4S] cluster is required as a cofactor.

The protein localises to the cytoplasm. It catalyses the reaction N(6)-dimethylallyladenosine(37) in tRNA + (sulfur carrier)-SH + AH2 + 2 S-adenosyl-L-methionine = 2-methylsulfanyl-N(6)-dimethylallyladenosine(37) in tRNA + (sulfur carrier)-H + 5'-deoxyadenosine + L-methionine + A + S-adenosyl-L-homocysteine + 2 H(+). Functionally, catalyzes the methylthiolation of N6-(dimethylallyl)adenosine (i(6)A), leading to the formation of 2-methylthio-N6-(dimethylallyl)adenosine (ms(2)i(6)A) at position 37 in tRNAs that read codons beginning with uridine. The chain is tRNA-2-methylthio-N(6)-dimethylallyladenosine synthase from Parafrankia sp. (strain EAN1pec).